Reading from the N-terminus, the 985-residue chain is Regulator of telomere elongation helicase 1 homolog (985 aa).

One can recognise a Helicase ATP-binding domain in the interval A7–D303. S42 to T49 contacts ATP. The [4Fe-4S] cluster site is built by C146, C164, C173, and C209. A DEAH box motif is present at residues D252 to H255. A disordered region spans residues V863–T883. Over residues S872–V882 the composition is skewed to polar residues. T874 carries the post-translational modification Phosphothreonine.

This sequence belongs to the helicase family. RAD3/XPD subfamily. Expressed in both male germline and somatic cells (at protein level). Expressed in ovarian germline stem cells (at protein level). Expressed in adult testes (at protein level). Expressed in the germarium including germline stem cells.

It is found in the nucleus. The protein resides in the chromosome. The catalysed reaction is ATP + H2O = ADP + phosphate + H(+). A probable ATP-dependent DNA helicase implicated in DNA repair and the maintenance of genomic stability. Acts as an anti-recombinase to counteract toxic recombination and limit crossover during meiosis. Regulates meiotic recombination and crossover homeostasis by physically dissociating strand invasion events and thereby promotes noncrossover repair by meiotic synthesis dependent strand annealing (SDSA) as well as disassembly of D loop recombination intermediates. In male germline stem cells (GSCs), plays a role in GSCs maintenance during larval germline development by modulating the expression of genes such as Stat92E and preventing DNA damage-induced checkpoint activation. May play a role in female germline stem cell maintenance. This is Regulator of telomere elongation helicase 1 homolog from Drosophila melanogaster (Fruit fly).